The sequence spans 624 residues: Chaperone protein HtpG (624 aa).

The segment at 1–336 (MKGQETRGFQ…SSDLSLNVSR (336 aa)) is a; substrate-binding. The b stretch occupies residues 337–552 (EILQDSTVTR…ADEMSTQMAK (216 aa)). A c region spans residues 553 to 624 (LFAAAGQKVP…IRRMNQLLVS (72 aa)).

This sequence belongs to the heat shock protein 90 family. Homodimer.

Its subcellular location is the cytoplasm. In terms of biological role, molecular chaperone. Has ATPase activity. This Shigella dysenteriae serotype 1 (strain Sd197) protein is Chaperone protein HtpG.